Here is a 91-residue protein sequence, read N- to C-terminus: Methanol dehydrogenase [cytochrome c] subunit 2 (91 aa).

A signal peptide spans 1-22 (MKHVLTLLALASVFAVSNQALA). A disulfide bridge links C28 with C34.

It belongs to the methanol dehydrogenase subunit 2 family. In terms of assembly, heterotetramer composed of 2 alpha and 2 beta subunits.

Its subcellular location is the cell inner membrane. The catalysed reaction is 2 Fe(III)-[cytochrome cL] + a primary alcohol = 2 Fe(II)-[cytochrome cL] + an aldehyde + 2 H(+). Catalyzes the oxidation of primary alcohols including methanol. The chain is Methanol dehydrogenase [cytochrome c] subunit 2 (moxI) from Methylophilus methylotrophus (Bacterium W3A1).